The primary structure comprises 557 residues: Hepatocyte nuclear factor 1-beta (557 aa).

The interval 1-31 (MVSKLTSLQQELLSALLSSGVTKEVLVQALE) is dimerization. One can recognise an HNF-p1 domain in the interval 1-32 (MVSKLTSLQQELLSALLSSGVTKEVLVQALEE). Residues Ser-49, Ser-52, Ser-75, and Ser-80 each carry the phosphoserine modification. The tract at residues 64-85 (TLTNGHAKGRLSGDEGSEDGDD) is disordered. The region spanning 93-188 (KELQALNTEE…ILRQFNQTVQ (96 aa)) is the POU-specific atypical domain. The segment at residues 231–311 (MRRNRFKWGP…NRRKEEAFRQ (81 aa)) is a DNA-binding region (homeobox; HNF1-type). Positions 324 to 370 (HSLNPLLSHGSPHHQPSSSPPNKLSGVRYSQQGNNEVTSSSTISHHG) are disordered. Residues 328–344 (PLLSHGSPHHQPSSSPP) are compositionally biased toward low complexity. The span at 351-370 (RYSQQGNNEVTSSSTISHHG) shows a compositional bias: polar residues.

This sequence belongs to the HNF1 homeobox family. Binds DNA as a dimer. Can form homodimer or heterodimer with HNF1-alpha. Interacts (via HNF-p1 domain) with PCBD1; the interaction increases its transactivation activity.

It localises to the nucleus. In terms of biological role, transcription factor that binds to the inverted palindrome 5'-GTTAATNATTAAC-3'. Binds to the FPC element in the cAMP regulatory unit of the PLAU gene. Transcriptional activity is increased by coactivator PCBD1. This is Hepatocyte nuclear factor 1-beta (HNF1B) from Pongo abelii (Sumatran orangutan).